A 464-amino-acid polypeptide reads, in one-letter code: DNA primase DnaG (464 aa).

The Toprim domain maps to 198-272; the sequence is DSIIVVEGRA…DVDYVARAPE (75 aa). E204, D246, and D248 together coordinate Mg(2+). The segment covering 315–333 has biased composition (basic and acidic residues); sequence RESEGERQPRQVTKPEPEV. The disordered stretch occupies residues 315–351; the sequence is RESEGERQPRQVTKPEPEVVKAQPKAETPEEKREPAT.

It belongs to the archaeal DnaG primase family. As to quaternary structure, forms a ternary complex with MCM helicase and DNA. Component of the archaeal exosome complex. Mg(2+) serves as cofactor.

The catalysed reaction is ssDNA + n NTP = ssDNA/pppN(pN)n-1 hybrid + (n-1) diphosphate.. Its function is as follows. RNA polymerase that catalyzes the synthesis of short RNA molecules used as primers for DNA polymerase during DNA replication. Also part of the exosome, which is a complex involved in RNA degradation. Acts as a poly(A)-binding protein that enhances the interaction between heteromeric, adenine-rich transcripts and the exosome. This is DNA primase DnaG from Thermococcus kodakarensis (strain ATCC BAA-918 / JCM 12380 / KOD1) (Pyrococcus kodakaraensis (strain KOD1)).